The sequence spans 409 residues: DNA polymerase IV 2 (409 aa).

A UmuC domain is found at 5-190 (IFMVDMESFF…LPIECLYGVG (186 aa)). Residues Asp-9 and Asp-105 each contribute to the Mg(2+) site. Glu-106 is an active-site residue.

This sequence belongs to the DNA polymerase type-Y family. As to quaternary structure, monomer. Mg(2+) is required as a cofactor.

It localises to the cytoplasm. It carries out the reaction DNA(n) + a 2'-deoxyribonucleoside 5'-triphosphate = DNA(n+1) + diphosphate. Its function is as follows. Poorly processive, error-prone DNA polymerase involved in untargeted mutagenesis. Copies undamaged DNA at stalled replication forks, which arise in vivo from mismatched or misaligned primer ends. These misaligned primers can be extended by PolIV. Exhibits no 3'-5' exonuclease (proofreading) activity. May be involved in translesional synthesis, in conjunction with the beta clamp from PolIII. The sequence is that of DNA polymerase IV 2 (dinB2) from Halalkalibacterium halodurans (strain ATCC BAA-125 / DSM 18197 / FERM 7344 / JCM 9153 / C-125) (Bacillus halodurans).